We begin with the raw amino-acid sequence, 135 residues long: Large ribosomal subunit protein uL16c (135 aa).

Belongs to the universal ribosomal protein uL16 family. Part of the 50S ribosomal subunit.

The protein localises to the plastid. Its subcellular location is the chloroplast. This is Large ribosomal subunit protein uL16c from Platanus occidentalis (Sycamore).